The chain runs to 289 residues: Lipoyl synthase (289 aa).

7 residues coordinate [4Fe-4S] cluster: Cys-33, Cys-38, Cys-44, Cys-59, Cys-63, Cys-66, and Ser-274. The Radical SAM core domain occupies 45–263 (FAGGTATFLI…SQGESELGFL (219 aa)).

Belongs to the radical SAM superfamily. Lipoyl synthase family. Requires [4Fe-4S] cluster as cofactor.

Its subcellular location is the cytoplasm. It carries out the reaction [[Fe-S] cluster scaffold protein carrying a second [4Fe-4S](2+) cluster] + N(6)-octanoyl-L-lysyl-[protein] + 2 oxidized [2Fe-2S]-[ferredoxin] + 2 S-adenosyl-L-methionine + 4 H(+) = [[Fe-S] cluster scaffold protein] + N(6)-[(R)-dihydrolipoyl]-L-lysyl-[protein] + 4 Fe(3+) + 2 hydrogen sulfide + 2 5'-deoxyadenosine + 2 L-methionine + 2 reduced [2Fe-2S]-[ferredoxin]. It functions in the pathway protein modification; protein lipoylation via endogenous pathway; protein N(6)-(lipoyl)lysine from octanoyl-[acyl-carrier-protein]: step 2/2. Its function is as follows. Catalyzes the radical-mediated insertion of two sulfur atoms into the C-6 and C-8 positions of the octanoyl moiety bound to the lipoyl domains of lipoate-dependent enzymes, thereby converting the octanoylated domains into lipoylated derivatives. The sequence is that of Lipoyl synthase from Synechococcus sp. (strain RCC307).